The chain runs to 185 residues: Intraflagellar transport protein 22 homolog (185 aa).

GTP contacts are provided by residues 10–17, 63–67, and 123–126; these read GPCESGKT, DCGGD, and HKPG.

Belongs to the small GTPase superfamily. Rab family. In terms of assembly, component of the IFT complex B, at least composed of IFT20, IFT22, IFT25, IFT27, IFT46, IFT52, TRAF3IP1/IFT54, IFT57, IFT74, IFT80, IFT81, and IFT88. Interacts with IFT88. Interacts with CFAP61.

The protein localises to the cell projection. It localises to the cilium. Small GTPase-like component of the intraflagellar transport (IFT) complex B. This Bos taurus (Bovine) protein is Intraflagellar transport protein 22 homolog (IFT22).